The following is a 337-amino-acid chain: DNA-directed RNA polymerase subunit alpha (337 aa).

An alpha N-terminal domain (alpha-NTD) region spans residues 1–233; it reads MVREKVTVST…DLFIPFLHME (233 aa). Residues 264-337 form an alpha C-terminal domain (alpha-CTD) region; that stretch reads NKKIALKSIF…FVIDLAKNKF (74 aa).

This sequence belongs to the RNA polymerase alpha chain family. In terms of assembly, in plastids the minimal PEP RNA polymerase catalytic core is composed of four subunits: alpha, beta, beta', and beta''. When a (nuclear-encoded) sigma factor is associated with the core the holoenzyme is formed, which can initiate transcription.

The protein resides in the plastid. Its subcellular location is the chloroplast. It catalyses the reaction RNA(n) + a ribonucleoside 5'-triphosphate = RNA(n+1) + diphosphate. Functionally, DNA-dependent RNA polymerase catalyzes the transcription of DNA into RNA using the four ribonucleoside triphosphates as substrates. The polypeptide is DNA-directed RNA polymerase subunit alpha (Atropa belladonna (Belladonna)).